Consider the following 339-residue polypeptide: Ketol-acid reductoisomerase (NADP(+)) (339 aa).

Positions 1 to 182 (MRVYYDRDAD…GGGRAGIIET (182 aa)) constitute a KARI N-terminal Rossmann domain. Residues 24–27 (YGSQ), R48, S51, T53, and 83–86 (DELQ) each bind NADP(+). H108 is a catalytic residue. G134 contributes to the NADP(+) binding site. The KARI C-terminal knotted domain maps to 183 to 328 (TFKEECETDL…AELRAMMPWI (146 aa)). Residues D191, E195, E227, and E231 each coordinate Mg(2+). S252 serves as a coordination point for substrate.

The protein belongs to the ketol-acid reductoisomerase family. Mg(2+) is required as a cofactor.

The catalysed reaction is (2R)-2,3-dihydroxy-3-methylbutanoate + NADP(+) = (2S)-2-acetolactate + NADPH + H(+). It catalyses the reaction (2R,3R)-2,3-dihydroxy-3-methylpentanoate + NADP(+) = (S)-2-ethyl-2-hydroxy-3-oxobutanoate + NADPH + H(+). It participates in amino-acid biosynthesis; L-isoleucine biosynthesis; L-isoleucine from 2-oxobutanoate: step 2/4. It functions in the pathway amino-acid biosynthesis; L-valine biosynthesis; L-valine from pyruvate: step 2/4. Functionally, involved in the biosynthesis of branched-chain amino acids (BCAA). Catalyzes an alkyl-migration followed by a ketol-acid reduction of (S)-2-acetolactate (S2AL) to yield (R)-2,3-dihydroxy-isovalerate. In the isomerase reaction, S2AL is rearranged via a Mg-dependent methyl migration to produce 3-hydroxy-3-methyl-2-ketobutyrate (HMKB). In the reductase reaction, this 2-ketoacid undergoes a metal-dependent reduction by NADPH to yield (R)-2,3-dihydroxy-isovalerate. The polypeptide is Ketol-acid reductoisomerase (NADP(+)) (Beijerinckia indica subsp. indica (strain ATCC 9039 / DSM 1715 / NCIMB 8712)).